The sequence spans 176 residues: Peptide methionine sulfoxide reductase MsrA (176 aa).

Residue C14 is part of the active site.

The protein belongs to the MsrA Met sulfoxide reductase family.

The catalysed reaction is L-methionyl-[protein] + [thioredoxin]-disulfide + H2O = L-methionyl-(S)-S-oxide-[protein] + [thioredoxin]-dithiol. It carries out the reaction [thioredoxin]-disulfide + L-methionine + H2O = L-methionine (S)-S-oxide + [thioredoxin]-dithiol. Has an important function as a repair enzyme for proteins that have been inactivated by oxidation. Catalyzes the reversible oxidation-reduction of methionine sulfoxide in proteins to methionine. The sequence is that of Peptide methionine sulfoxide reductase MsrA from Halalkalibacterium halodurans (strain ATCC BAA-125 / DSM 18197 / FERM 7344 / JCM 9153 / C-125) (Bacillus halodurans).